Reading from the N-terminus, the 197-residue chain is Ycf20-like protein (197 aa).

The next 3 membrane-spanning stretches (helical) occupy residues M113–G133, W138–Y158, and F173–F193.

The protein belongs to the ycf20 family.

Its subcellular location is the membrane. In Arabidopsis thaliana (Mouse-ear cress), this protein is Ycf20-like protein.